The following is a 2324-amino-acid chain: Serine/threonine-protein kinase MEC1 (2324 aa).

Residues 1349–1901 (VLAQKSLETN…LWYITVLLNS (553 aa)) enclose the FAT domain. Residues 2005–2308 (FTPHYKVYSS…QVDTVVQQAS (304 aa)) form the PI3K/PI4K catalytic domain. The segment at 2011-2017 (VYSSLKK) is G-loop. The catalytic loop stretch occupies residues 2177 to 2185 (GLGDRHLEN). The tract at residues 2197–2221 (HVDFDCLFEKGKTLPVPEIVPFRLT) is activation loop. One can recognise an FATC domain in the interval 2292–2324 (LPLSVPGQVDTVVQQASSDENLAQMYIGWLPFW).

The protein belongs to the PI3/PI4-kinase family. ATM subfamily.

It localises to the nucleus. It catalyses the reaction L-seryl-[protein] + ATP = O-phospho-L-seryl-[protein] + ADP + H(+). The enzyme catalyses L-threonyl-[protein] + ATP = O-phospho-L-threonyl-[protein] + ADP + H(+). In terms of biological role, serine/threonine protein kinase which activates checkpoint signaling upon genotoxic stresses such as ionizing radiation (IR), ultraviolet light (UV), or DNA replication stalling, thereby acting as a DNA damage sensor. Recognizes the substrate consensus sequence [ST]-Q. Recruited to DNA lesions in order to initiate the DNA repair by homologous recombination. Phosphorylates histone H2A to form H2AS128ph (gamma-H2A) at sites of DNA damage, also involved in the regulation of DNA damage response mechanism. Required for cell growth and meiotic recombination. The sequence is that of Serine/threonine-protein kinase MEC1 (MEC1) from Eremothecium gossypii (strain ATCC 10895 / CBS 109.51 / FGSC 9923 / NRRL Y-1056) (Yeast).